The chain runs to 144 residues: uncharacterized protein (144 aa).

This sequence belongs to the mimivirus L885/R898 family.

This is an uncharacterized protein from Acanthamoeba polyphaga (Amoeba).